A 245-amino-acid polypeptide reads, in one-letter code: Large ribosomal subunit protein uL2 (245 aa).

The interval 196-226 (SPYAHPHGGGSHQKGGTPVSKTAPPGQKVGF) is disordered.

It belongs to the universal ribosomal protein uL2 family. As to quaternary structure, part of the 50S ribosomal subunit. Forms a bridge to the 30S subunit in the 70S ribosome.

Functionally, one of the primary rRNA binding proteins. Required for association of the 30S and 50S subunits to form the 70S ribosome, for tRNA binding and peptide bond formation. It has been suggested to have peptidyltransferase activity; this is somewhat controversial. Makes several contacts with the 16S rRNA in the 70S ribosome. The chain is Large ribosomal subunit protein uL2 from Pyrobaculum neutrophilum (strain DSM 2338 / JCM 9278 / NBRC 100436 / V24Sta) (Thermoproteus neutrophilus).